Here is a 488-residue protein sequence, read N- to C-terminus: GTPase Der (488 aa).

2 EngA-type G domains span residues 3-166 (PVVA…AEAM) and 200-373 (IKLA…DSAT). Residues 9–16 (GRPNVGKS), 56–60 (DTGGI), 118–121 (NKVD), 206–213 (GKPNVGKS), 253–257 (DTAGV), and 318–321 (NKWD) contribute to the GTP site. One can recognise a KH-like domain in the interval 374–458 (RRVSTSMLTR…PIQLRFHEGD (85 aa)).

Belongs to the TRAFAC class TrmE-Era-EngA-EngB-Septin-like GTPase superfamily. EngA (Der) GTPase family. Associates with the 50S ribosomal subunit.

GTPase that plays an essential role in the late steps of ribosome biogenesis. The sequence is that of GTPase Der from Shewanella amazonensis (strain ATCC BAA-1098 / SB2B).